A 79-amino-acid chain; its full sequence is CDC42 small effector protein 1 (79 aa).

S-palmitoyl cysteine attachment occurs at residues Cys10 and Cys11. In terms of domain architecture, CRIB spans 30-43 (IGEPMNFVHLTHIG). Positions 48 to 79 (GAGDGLAMTGAVQEQMRSKGNRDRPWSNSRGL) are disordered. Positions 63–72 (MRSKGNRDRP) are enriched in basic and acidic residues.

It belongs to the CDC42SE/SPEC family. Interacts with CDC42 (in GTP-bound form). Interacts weakly with RAC1 and not at all with RHOA.

Its subcellular location is the cytoplasm. It localises to the cytoskeleton. The protein resides in the cell membrane. Functionally, probably involved in the organization of the actin cytoskeleton by acting downstream of CDC42, inducing actin filament assembly. Alters CDC42-induced cell shape changes. In activated T-cells, may play a role in CDC42-mediated F-actin accumulation at the immunological synapse. May play a role in early contractile events in phagocytosis in macrophages. This is CDC42 small effector protein 1 (CDC42SE1) from Bos taurus (Bovine).